Consider the following 268-residue polypeptide: Tryptophan synthase alpha chain (268 aa).

Active-site proton acceptor residues include Glu49 and Asp60.

This sequence belongs to the TrpA family. Tetramer of two alpha and two beta chains.

The catalysed reaction is (1S,2R)-1-C-(indol-3-yl)glycerol 3-phosphate + L-serine = D-glyceraldehyde 3-phosphate + L-tryptophan + H2O. It functions in the pathway amino-acid biosynthesis; L-tryptophan biosynthesis; L-tryptophan from chorismate: step 5/5. The alpha subunit is responsible for the aldol cleavage of indoleglycerol phosphate to indole and glyceraldehyde 3-phosphate. The protein is Tryptophan synthase alpha chain of Escherichia coli O1:K1 / APEC.